Here is a 141-residue protein sequence, read N- to C-terminus: Nucleoside diphosphate kinase (141 aa).

ATP contacts are provided by lysine 11, phenylalanine 59, arginine 87, threonine 93, arginine 104, and asparagine 114. The active-site Pros-phosphohistidine intermediate is the histidine 117.

It belongs to the NDK family. In terms of assembly, homotetramer. Mg(2+) is required as a cofactor.

Its subcellular location is the cytoplasm. The enzyme catalyses a 2'-deoxyribonucleoside 5'-diphosphate + ATP = a 2'-deoxyribonucleoside 5'-triphosphate + ADP. It carries out the reaction a ribonucleoside 5'-diphosphate + ATP = a ribonucleoside 5'-triphosphate + ADP. Its function is as follows. Major role in the synthesis of nucleoside triphosphates other than ATP. The ATP gamma phosphate is transferred to the NDP beta phosphate via a ping-pong mechanism, using a phosphorylated active-site intermediate. This Stenotrophomonas maltophilia (strain R551-3) protein is Nucleoside diphosphate kinase.